A 771-amino-acid chain; its full sequence is MVGLTPQHYGNAIALMTYLASTALADNKFPDCTSGPLSKLAVCDTSRDVTTRAQSLVDAMSFAEKVNNTQYEAPGVPRLGLPAYNWWSEALHGVAGAPGVHFADSGPFSYATSFAQPILLGASFDDELVKQVATVVGTEGRAFGNAGRAGLDYWTPNINPFRDPRWGRGQETPGEDPLHVSRYVYHLVDGLQGGIGPARPQIAATCKHFAAYDMEDWNGVSRHEFDARVSTQDLAEFYLPSFKSCVRDAQVDAVMCSYNALNGVPTCADPYLLQTLLREHWDWDQPGHWVVSDCGAIDDIYIGHNYTKTGAEAAAVALNAGTDLDCGTVFPKHLGEAAEQGLYTNQTLDRALVRLYSSLVKLGYFDPAEKQPYGSIGWKDVDTPAAEQLAHKAAVEGIVLLKNDQTLPLKAKGTLALIGPYANATKQMQGNYQGPPKYIRTLEWAATQHGYQVQYSPGTAINNSSTAGFAAALAAAKDADVVLYAGGIDNTIESETLDRTTITWPGNQLSLISELSNLHKPLIVIQFGGGQVDDTPLLTNPHVNALLWAGYPSQEGGAAIFDILTGKAAPAGRLPITQYPAAYTAQVPMTEMGLRAGGDNPGRTYRWYDKAVVPFGFGLHYTSFEVSWDRGRLGPYNTAALVNRAPGGSHVDRALFDTFRVQVQNTGTVTSDYVALLFVKTEDAGPEPYPLKTLVGYTRVQQVKPGERRSVEIEVTLGAMARTAANGDLVLYPGKYTLQVDVGERGYPTARVSVHGKEVVLDHFPQPPEGR.

The signal sequence occupies residues 1-25; sequence MVGLTPQHYGNAIALMTYLASTALA. An N-linked (GlcNAc...) asparagine glycan is attached at N67. D293 is an active-site residue. N-linked (GlcNAc...) asparagine glycosylation is found at N305, N345, N423, N462, and N463.

The protein belongs to the glycosyl hydrolase 3 family.

The protein resides in the secreted. It carries out the reaction Hydrolysis of (1-&gt;4)-beta-D-xylans, to remove successive D-xylose residues from the non-reducing termini.. The protein operates within glycan degradation; xylan degradation. Xylan 1,4-beta-xylosidase involved in the hydrolysis of xylan, a major structural heterogeneous polysaccharide found in plant biomass representing the second most abundant polysaccharide in the biosphere, after cellulose. This is Probable exo-1,4-beta-xylosidase bxlB (bxlB) from Aspergillus clavatus (strain ATCC 1007 / CBS 513.65 / DSM 816 / NCTC 3887 / NRRL 1 / QM 1276 / 107).